Here is a 602-residue protein sequence, read N- to C-terminus: Zinc finger protein 652-B (602 aa).

The tract at residues 60–232 (FQDSKPTNEV…PSDKAKSEEK (173 aa)) is disordered. Basic and acidic residues predominate over residues 65 to 79 (PTNEVHAVKGERENS). 2 stretches are compositionally biased toward acidic residues: residues 80–108 (GESE…DEDE) and 148–167 (DDEG…DEEN). The segment covering 222 to 232 (SPSDKAKSEEK) has biased composition (basic and acidic residues). A C2H2-type 1 zinc finger spans residues 235–258 (LTCDKCPRVFNTRWYLEKHMNVTH). The C2H2-type 2; degenerate zinc finger occupies 262–284 (QICDKCGKKFVLESELSLHLQTD). C2H2-type zinc fingers lie at residues 289–312 (IQCI…KIVH), 319–341 (FSCE…LVAH), 347–369 (FTCE…SLQH), 375–397 (FRCE…MSIH), 403–425 (FMCQ…MKTH), and 431–453 (FICE…RRTH). The C2H2-type 9; degenerate zinc-finger motif lies at 459–482 (YPCDVCGMRFRFSNMLKAHKEKCF). The interval 543 to 575 (PFSHLHLHPHSHTHHLAVPPVPHLPPPPALFKS) is disordered. Residues 545–557 (SHLHLHPHSHTHH) are compositionally biased toward basic residues. The span at 561 to 571 (PPVPHLPPPPA) shows a compositional bias: pro residues.

It belongs to the krueppel C2H2-type zinc-finger protein family.

Its subcellular location is the nucleus. Functionally, may be involved in transcriptional regulation. The polypeptide is Zinc finger protein 652-B (znf652-b) (Xenopus laevis (African clawed frog)).